Reading from the N-terminus, the 695-residue chain is GRB2-associated-binding protein 1 (695 aa).

The residue at position 2 (serine 2) is an N-acetylserine. Positions 5–116 constitute a PH domain; the sequence is EVVCSGWLRK…WVRCICDICG (112 aa). Positions 204-229 are disordered; that stretch reads AKPTFSETDCNDNVPSHQTPASSQSK. Positions 206–229 are enriched in polar residues; that stretch reads PTFSETDCNDNVPSHQTPASSQSK. 4 positions are modified to phosphoserine: serine 251, serine 253, serine 266, and serine 304. The interval 306-387 is disordered; that stretch reads SYDIPPTPGN…PAGMTPSRSN (82 aa). Over residues 314-334 the composition is skewed to polar residues; that stretch reads GNTYQIPRTFPESTLGQSSKL. The residue at position 388 (threonine 388) is a Phosphothreonine. Residues serine 403 and serine 455 each carry the phosphoserine modification. The segment at 453-659 is disordered; it reads PNSPPRQHSG…GSSMADERVD (207 aa). Composition is skewed to polar residues over residues 457-466 and 605-617; these read PRQHSGSFTE and FASN…SSPM. At tyrosine 628 the chain carries Phosphotyrosine. Residue threonine 639 is modified to Phosphothreonine. At serine 652 the chain carries Phosphoserine. Position 660 is a phosphotyrosine (tyrosine 660). The segment at 671–695 is disordered; it reads LKSTREAWTDGRQSTESETPTKNVK. Basic and acidic residues predominate over residues 673-685; that stretch reads STREAWTDGRQST. Serine 684 is modified (phosphoserine). Over residues 686–695 the composition is skewed to polar residues; the sequence is ESETPTKNVK.

Belongs to the GAB family. As to quaternary structure, identified in a complex containing FRS2, GRB2, GAB1, PIK3R1 and SOS1. Forms a tripartite complex containing GAB1, METTL13 and SPRY2. Within the complex interacts with METTL13. Interacts with GRB2 and with other SH2-containing proteins. Interacts with phosphorylated LAT2. Interacts with PTPRJ. Interacts (phosphorylated) with PTPN11. Interacts with HCK. Phosphorylated on tyrosine residue(s) by the epidermal growth factor receptor (EGFR) and the insulin receptor (INSR). Tyrosine phosphorylation of GAB1 mediates interaction with several proteins that contain SH2 domains. Phosphorylated on tyrosine residues by HCK upon IL6 signaling. Phosphorylated in response to FGFR1 activation. Expressed in the inner ear (at protein level). Expression is detected in the cochlear duct, spiral limbus region, efferent and afferent nerves, and in spiral ganglion neurons (at protein level).

In terms of biological role, adapter protein that plays a role in intracellular signaling cascades triggered by activated receptor-type kinases. Plays a role in FGFR1 signaling. Probably involved in signaling by the epidermal growth factor receptor (EGFR) and the insulin receptor (INSR). Involved in the MET/HGF-signaling pathway. This chain is GRB2-associated-binding protein 1 (Gab1), found in Mus musculus (Mouse).